A 541-amino-acid chain; its full sequence is Protein wntless homolog (541 aa).

The Cytoplasmic portion of the chain corresponds to 1-15 (MAGAIIENMSTKKLC). Residues 16 to 36 (IVGGILLVFQIVAFLVGGLIA) form a helical membrane-spanning segment. Residues 37–232 (PAPTTAVSYV…GIHQNGGFTK (196 aa)) are Lumenal-facing. The interval 101-202 (MEMSPWFQFM…KYYLLNIRLP (102 aa)) is interaction with Wnt proteins. The chain crosses the membrane as a helical span at residues 233–253 (VWFAMKTFLTPSIFIIMVWYW). At 254-268 (RRITMMSRPPVLLEK) the chain is on the cytoplasmic side. Residues 269–289 (VIFALGISMTFINIPVEWFSI) form a helical membrane-spanning segment. The Lumenal segment spans residues 290–303 (GFDWTWMLLFGDIR). A helical transmembrane segment spans residues 304–324 (QGIFYAMLLSFWIIFCGEHMM). The Cytoplasmic portion of the chain corresponds to 325 to 331 (DQHERNH). A helical transmembrane segment spans residues 332 to 352 (IAGYWKQVGPIAVGSFCLFIF). The Lumenal segment spans residues 353–380 (DMCERGVQLTNPFYSIWTTDVGTELAMA). The helical transmembrane segment at 381 to 401 (FIIVAGICLCLYFLFLCFMVF) threads the bilayer. At 402-431 (QVFRNISGKQSSLPAMSKVRRLHYEGLIFR) the chain is on the cytoplasmic side. Residues 432 to 452 (FKFLMLITLACAAMTVIFFIV) form a helical membrane-spanning segment. Topologically, residues 453 to 471 (SQVTEGHWKWGGVTVQVSS) are lumenal. A helical membrane pass occupies residues 472-492 (AFFTGIYGMWNLYVFALMFLY). Residues 493–541 (APSHKNYGEDQSNGDLGVHSGEELQLTTTITHVDGPTEIYKLTRKEAQE) are Cytoplasmic-facing.

Belongs to the wntless family. Interacts with WNT3A. Interacts with WNT1, WNT3 and WNT5A. Post-translationally, N-glycosylated. In terms of tissue distribution, expressed in the brain, skeletal muscle, heart muscle, lung, gut, liver, and kidney (at protein level). In the brain, expressed in the cortex, striatum, ventral tegmentum, nucleus accumbens and to a lesser extent in the Purkinjie cells in the cerebellum. Expressed in eye iridocorneal angle.

It localises to the golgi apparatus membrane. Its subcellular location is the cytoplasmic vesicle membrane. It is found in the cell membrane. The protein resides in the endoplasmic reticulum membrane. The protein localises to the early endosome membrane. Functionally, regulates Wnt proteins sorting and secretion in a feedback regulatory mechanism. This reciprocal interaction plays a key role in the regulation of expression, subcellular location, binding and organelle-specific association of Wnt proteins. Also plays an important role in establishment of the anterior-posterior body axis formation during development. The polypeptide is Protein wntless homolog (Wls) (Rattus norvegicus (Rat)).